Consider the following 308-residue polypeptide: Ribosomal RNA large subunit methyltransferase F (308 aa).

The protein belongs to the methyltransferase superfamily. METTL16/RlmF family.

The protein localises to the cytoplasm. It catalyses the reaction adenosine(1618) in 23S rRNA + S-adenosyl-L-methionine = N(6)-methyladenosine(1618) in 23S rRNA + S-adenosyl-L-homocysteine + H(+). In terms of biological role, specifically methylates the adenine in position 1618 of 23S rRNA. This chain is Ribosomal RNA large subunit methyltransferase F, found in Salmonella schwarzengrund (strain CVM19633).